A 264-amino-acid polypeptide reads, in one-letter code: Thymidylate synthase (264 aa).

Position 21 (Arg-21) interacts with dUMP. His-51 serves as a coordination point for (6R)-5,10-methylene-5,6,7,8-tetrahydrofolate. 126–127 (RR) contributes to the dUMP binding site. Residue Cys-146 is the Nucleophile of the active site. DUMP is bound by residues 166-169 (RSCD), Asn-177, and 207-209 (HLY). Position 169 (Asp-169) interacts with (6R)-5,10-methylene-5,6,7,8-tetrahydrofolate. Residue Ala-263 coordinates (6R)-5,10-methylene-5,6,7,8-tetrahydrofolate.

It belongs to the thymidylate synthase family. Bacterial-type ThyA subfamily. In terms of assembly, homodimer.

Its subcellular location is the cytoplasm. It carries out the reaction dUMP + (6R)-5,10-methylene-5,6,7,8-tetrahydrofolate = 7,8-dihydrofolate + dTMP. It functions in the pathway pyrimidine metabolism; dTTP biosynthesis. Its function is as follows. Catalyzes the reductive methylation of 2'-deoxyuridine-5'-monophosphate (dUMP) to 2'-deoxythymidine-5'-monophosphate (dTMP) while utilizing 5,10-methylenetetrahydrofolate (mTHF) as the methyl donor and reductant in the reaction, yielding dihydrofolate (DHF) as a by-product. This enzymatic reaction provides an intracellular de novo source of dTMP, an essential precursor for DNA biosynthesis. This is Thymidylate synthase from Pectobacterium carotovorum subsp. carotovorum (strain PC1).